The primary structure comprises 609 residues: Elongation factor 4 (609 aa).

The region spanning 5–187 (SKIRNFSIIA…AIVAKIPPPE (183 aa)) is the tr-type G domain. Residues 17–22 (DHGKST) and 134–137 (NKID) contribute to the GTP site.

Belongs to the TRAFAC class translation factor GTPase superfamily. Classic translation factor GTPase family. LepA subfamily.

The protein resides in the cell inner membrane. The enzyme catalyses GTP + H2O = GDP + phosphate + H(+). Its function is as follows. Required for accurate and efficient protein synthesis under certain stress conditions. May act as a fidelity factor of the translation reaction, by catalyzing a one-codon backward translocation of tRNAs on improperly translocated ribosomes. Back-translocation proceeds from a post-translocation (POST) complex to a pre-translocation (PRE) complex, thus giving elongation factor G a second chance to translocate the tRNAs correctly. Binds to ribosomes in a GTP-dependent manner. The chain is Elongation factor 4 from Erythrobacter litoralis (strain HTCC2594).